The following is a 222-amino-acid chain: MAGAEPFLADGNQELFPCEVCGRRFAADVLERHGPICKKLFNRKRKPFSSLKQRLQGTDIPTVKKTPQSKSPPVRKSNWRQQHEDFINAIRSAKQCMLAIKEGRPLPPPPPPSLNPDYIQRPYCMRRFNESAAERHTNFCKDQSSRRVFNPAQTAAKLASRAQGRAQMGPKKEPTVTSAVGALLQNRVLVATNEVPTKSGLAMDPASGAKLRQGFSKSSKKD.

The C2HC/C3H-type 1 zinc finger occupies 14 to 43; sequence ELFPCEVCGRRFAADVLERHGPICKKLFNR. Zn(2+) is bound by residues Cys-18, Cys-21, His-33, and Cys-37. The interval 48-78 is disordered; that stretch reads FSSLKQRLQGTDIPTVKKTPQSKSPPVRKSN. The segment at 117–146 adopts a C2HC/C3H-type 2; degenerate zinc-finger fold; sequence DYIQRPYCMRRFNESAAERHTNFCKDQSSR. The tract at residues 196–222 is disordered; it reads PTKSGLAMDPASGAKLRQGFSKSSKKD.

The protein belongs to the ZC2HC1 family. Zn(2+) serves as cofactor.

In Homo sapiens (Human), this protein is Zinc finger C2HC domain-containing protein 1B (ZC2HC1B).